The primary structure comprises 266 residues: Type II iodothyronine deiodinase (266 aa).

Over 1-13 (MGSASEDLLVTLQ) the chain is Lumenal. A helical; Signal-anchor for type III membrane protein transmembrane segment spans residues 14-34 (ILPGFFSNCLFLALYDSVVLV). At 35-266 (KRVVALLSRS…QWLELSYGRR (232 aa)) the chain is on the cytoplasmic side. The active site involves selenocysteine 134. Residue selenocysteine 134 is a non-standard amino acid, selenocysteine.

Belongs to the iodothyronine deiodinase family. In terms of assembly, predominantly monomer. Can form homodimers but homodimerization is not essential for enzyme activity.

It localises to the endoplasmic reticulum membrane. It catalyses the reaction 3,3',5-triiodo-L-thyronine + iodide + A + H(+) = L-thyroxine + AH2. It carries out the reaction 3,3'-diiodo-L-thyronine + iodide + A + H(+) = 3,3',5'-triiodo-L-thyronine + AH2. The enzyme catalyses 3'-iodo-L-thyronine + iodide + A + H(+) = 3',5'-diiodo-L-thyronine + AH2. With respect to regulation, not inhibited by N(6)-propylthiouracil. Plays a crucial role in the metabolism of thyroid hormones (TH) and has specific roles in TH activation and inactivation by deiodination. Catalyzes the conversion of T4 (L-thyroxine/3,5,3',5'-tetraiodothyronine) to T3 (3,5,3'-triiodothyronine) and rT3 (3,3',5'-triiodothyronine) to T2 (3,3'-diiodothyronine) via outer-ring deiodination (ORD). Catalyzes the conversion 3',5'-T2 (3,5-diiodothyronine) to 3-T1 (3-monoiodothyronine) via ORD. In Fundulus heteroclitus (Killifish), this protein is Type II iodothyronine deiodinase (dio2).